Here is a 290-residue protein sequence, read N- to C-terminus: Protease HtpX (290 aa).

Helical transmembrane passes span 6-26 and 36-56; these read LFLV…NILF and ISGL…ISLL. His-143 provides a ligand contact to Zn(2+). Glu-144 is an active-site residue. His-147 contacts Zn(2+). 2 helical membrane passes run 158–178 and 200–220; these read LIQG…AGVI and ITVF…VMWF. Glu-225 provides a ligand contact to Zn(2+).

The protein belongs to the peptidase M48B family. The cofactor is Zn(2+).

It is found in the cell inner membrane. This chain is Protease HtpX, found in Aeromonas hydrophila subsp. hydrophila (strain ATCC 7966 / DSM 30187 / BCRC 13018 / CCUG 14551 / JCM 1027 / KCTC 2358 / NCIMB 9240 / NCTC 8049).